A 282-amino-acid chain; its full sequence is Acetyl-coenzyme A carboxylase carboxyl transferase subunit beta (282 aa).

The 260-residue stretch at 23-282 (IWTKCGQCDA…MLSKLHHQQA (260 aa)) folds into the CoA carboxyltransferase N-terminal domain. 4 residues coordinate Zn(2+): Cys-27, Cys-30, Cys-46, and Cys-49. The C4-type zinc-finger motif lies at 27–49 (CGQCDAVLYKTELEKQLGVCPKC).

Belongs to the AccD/PCCB family. As to quaternary structure, acetyl-CoA carboxylase is a heterohexamer composed of biotin carboxyl carrier protein (AccB), biotin carboxylase (AccC) and two subunits each of ACCase subunit alpha (AccA) and ACCase subunit beta (AccD). Zn(2+) is required as a cofactor.

Its subcellular location is the cytoplasm. It carries out the reaction N(6)-carboxybiotinyl-L-lysyl-[protein] + acetyl-CoA = N(6)-biotinyl-L-lysyl-[protein] + malonyl-CoA. Its pathway is lipid metabolism; malonyl-CoA biosynthesis; malonyl-CoA from acetyl-CoA: step 1/1. In terms of biological role, component of the acetyl coenzyme A carboxylase (ACC) complex. Biotin carboxylase (BC) catalyzes the carboxylation of biotin on its carrier protein (BCCP) and then the CO(2) group is transferred by the transcarboxylase to acetyl-CoA to form malonyl-CoA. The chain is Acetyl-coenzyme A carboxylase carboxyl transferase subunit beta from Pseudoalteromonas atlantica (strain T6c / ATCC BAA-1087).